A 260-amino-acid chain; its full sequence is Cytosolic Fe-S cluster assembly factor Nubp2 homolog 2 (260 aa).

14 to 21 (GKGGVGKS) provides a ligand contact to ATP. Positions 188 and 191 each coordinate [4Fe-4S] cluster.

The protein belongs to the Mrp/NBP35 ATP-binding proteins family. NUBP2/CFD1 subfamily. As to quaternary structure, heterotetramer of 2 Nubp1 and 2 Nubp2 chains. It depends on [4Fe-4S] cluster as a cofactor.

The protein localises to the cytoplasm. Its function is as follows. Component of the cytosolic iron-sulfur (Fe/S) protein assembly (CIA) machinery. Required for maturation of extramitochondrial Fe-S proteins. The Nubp1-Nubp2 heterotetramer forms a Fe-S scaffold complex, mediating the de novo assembly of an Fe-S cluster and its transfer to target apoproteins. This chain is Cytosolic Fe-S cluster assembly factor Nubp2 homolog 2, found in Drosophila yakuba (Fruit fly).